A 626-amino-acid polypeptide reads, in one-letter code: tRNA uridine 5-carboxymethylaminomethyl modification enzyme MnmG (626 aa).

An FAD-binding site is contributed by glycine 13 to glycine 18. Glycine 273–phenylalanine 287 provides a ligand contact to NAD(+).

The protein belongs to the MnmG family. In terms of assembly, homodimer. Heterotetramer of two MnmE and two MnmG subunits. Requires FAD as cofactor.

Its subcellular location is the cytoplasm. NAD-binding protein involved in the addition of a carboxymethylaminomethyl (cmnm) group at the wobble position (U34) of certain tRNAs, forming tRNA-cmnm(5)s(2)U34. The chain is tRNA uridine 5-carboxymethylaminomethyl modification enzyme MnmG from Acinetobacter baumannii (strain ATCC 17978 / DSM 105126 / CIP 53.77 / LMG 1025 / NCDC KC755 / 5377).